Consider the following 186-residue polypeptide: Lipid A acyltransferase PagP (186 aa).

A signal peptide spans 1–19; that stretch reads MKRLISCLTIICALNRSAA. Residues His60, Asp103, and Ser104 contribute to the active site.

Belongs to the lipid A palmitoyltransferase family. In terms of assembly, homodimer.

It is found in the cell outer membrane. The catalysed reaction is a lipid A + a 1,2-diacyl-sn-glycero-3-phosphocholine = a hepta-acyl lipid A + a 2-acyl-sn-glycero-3-phosphocholine. It catalyses the reaction a lipid IVA + a 1,2-diacyl-sn-glycero-3-phosphocholine = a lipid IVB + a 2-acyl-sn-glycero-3-phosphocholine. It carries out the reaction a lipid IIA + a 1,2-diacyl-sn-glycero-3-phosphocholine = a lipid IIB + a 2-acyl-sn-glycero-3-phosphocholine. In terms of biological role, transfers a fatty acid residue from the sn-1 position of a phospholipid to the N-linked hydroxyfatty acid chain on the proximal unit of lipid A or its precursors. Confers resistance to cationic antimicrobial peptides (CAMPs). Promotes the ability of L.pneumophila to replicate and/or survive in macrophages. Important for ability to kill macrophages and to promote the virulence. In Legionella pneumophila, this protein is Lipid A acyltransferase PagP.